The sequence spans 434 residues: Trigger factor (434 aa).

Positions 161–246 (EDRATLDFTG…LKKVEVRELP (86 aa)) constitute a PPIase FKBP-type domain.

Belongs to the FKBP-type PPIase family. Tig subfamily.

It is found in the cytoplasm. The enzyme catalyses [protein]-peptidylproline (omega=180) = [protein]-peptidylproline (omega=0). Its function is as follows. Involved in protein export. Acts as a chaperone by maintaining the newly synthesized protein in an open conformation. Functions as a peptidyl-prolyl cis-trans isomerase. The protein is Trigger factor of Yersinia enterocolitica serotype O:8 / biotype 1B (strain NCTC 13174 / 8081).